A 192-amino-acid polypeptide reads, in one-letter code: Xanthine phosphoribosyltransferase (192 aa).

Xanthine is bound by residues leucine 20 and asparagine 27. 128–132 (ANGQA) is a binding site for 5-phospho-alpha-D-ribose 1-diphosphate. Lysine 156 provides a ligand contact to xanthine.

It belongs to the purine/pyrimidine phosphoribosyltransferase family. Xpt subfamily. Homodimer.

The protein resides in the cytoplasm. The catalysed reaction is XMP + diphosphate = xanthine + 5-phospho-alpha-D-ribose 1-diphosphate. It participates in purine metabolism; XMP biosynthesis via salvage pathway; XMP from xanthine: step 1/1. Functionally, converts the preformed base xanthine, a product of nucleic acid breakdown, to xanthosine 5'-monophosphate (XMP), so it can be reused for RNA or DNA synthesis. In Listeria monocytogenes serotype 4b (strain CLIP80459), this protein is Xanthine phosphoribosyltransferase.